A 93-amino-acid polypeptide reads, in one-letter code: UPF0457 protein GTNG_2792 (93 aa).

The protein belongs to the UPF0457 family.

This is UPF0457 protein GTNG_2792 from Geobacillus thermodenitrificans (strain NG80-2).